A 73-amino-acid polypeptide reads, in one-letter code: Large ribosomal subunit protein bL31 (73 aa).

Zn(2+) is bound by residues C16, C18, C37, and C40.

The protein belongs to the bacterial ribosomal protein bL31 family. Type A subfamily. Part of the 50S ribosomal subunit. It depends on Zn(2+) as a cofactor.

Its function is as follows. Binds the 23S rRNA. The chain is Large ribosomal subunit protein bL31 from Marinobacter nauticus (strain ATCC 700491 / DSM 11845 / VT8) (Marinobacter aquaeolei).